Reading from the N-terminus, the 459-residue chain is Siroheme synthase (459 aa).

The precorrin-2 dehydrogenase /sirohydrochlorin ferrochelatase stretch occupies residues 1–204 (MDHLPIFCQL…ADEKAVNATT (204 aa)). Residues 22–23 (DV) and 43–44 (LT) each bind NAD(+). Ser-128 is subject to Phosphoserine. The interval 216-459 (GEVVLVGAGP…KLNWFSNYYD (244 aa)) is uroporphyrinogen-III C-methyltransferase. Pro-225 is a binding site for S-adenosyl-L-methionine. Asp-248 (proton acceptor) is an active-site residue. The active-site Proton donor is Lys-270. Residues 301–303 (GGD), Ile-306, 331–332 (TA), Met-382, and Gly-411 each bind S-adenosyl-L-methionine.

This sequence in the N-terminal section; belongs to the precorrin-2 dehydrogenase / sirohydrochlorin ferrochelatase family. The protein in the C-terminal section; belongs to the precorrin methyltransferase family.

It catalyses the reaction uroporphyrinogen III + 2 S-adenosyl-L-methionine = precorrin-2 + 2 S-adenosyl-L-homocysteine + H(+). It carries out the reaction precorrin-2 + NAD(+) = sirohydrochlorin + NADH + 2 H(+). The catalysed reaction is siroheme + 2 H(+) = sirohydrochlorin + Fe(2+). It functions in the pathway cofactor biosynthesis; adenosylcobalamin biosynthesis; precorrin-2 from uroporphyrinogen III: step 1/1. It participates in cofactor biosynthesis; adenosylcobalamin biosynthesis; sirohydrochlorin from precorrin-2: step 1/1. The protein operates within porphyrin-containing compound metabolism; siroheme biosynthesis; precorrin-2 from uroporphyrinogen III: step 1/1. Its pathway is porphyrin-containing compound metabolism; siroheme biosynthesis; siroheme from sirohydrochlorin: step 1/1. It functions in the pathway porphyrin-containing compound metabolism; siroheme biosynthesis; sirohydrochlorin from precorrin-2: step 1/1. Its function is as follows. Multifunctional enzyme that catalyzes the SAM-dependent methylations of uroporphyrinogen III at position C-2 and C-7 to form precorrin-2 via precorrin-1. Then it catalyzes the NAD-dependent ring dehydrogenation of precorrin-2 to yield sirohydrochlorin. Finally, it catalyzes the ferrochelation of sirohydrochlorin to yield siroheme. The polypeptide is Siroheme synthase (Salmonella agona (strain SL483)).